Consider the following 197-residue polypeptide: Probable GTP-binding protein EngB (197 aa).

The EngB-type G domain maps to 25 to 197; sequence SAPEIAFAGR…VRDEFFKFTR (173 aa). Residues 33-40, 60-64, 79-82, 146-149, and 177-179 contribute to the GTP site; these read GRSNVGKS, GCTRQ, DLPG, TKID, and ISI. Ser-40 and Thr-62 together coordinate Mg(2+).

The protein belongs to the TRAFAC class TrmE-Era-EngA-EngB-Septin-like GTPase superfamily. EngB GTPase family. Mg(2+) serves as cofactor.

In terms of biological role, necessary for normal cell division and for the maintenance of normal septation. In Wolbachia pipientis subsp. Culex pipiens (strain wPip), this protein is Probable GTP-binding protein EngB.